The following is a 288-amino-acid chain: Quinate/shikimate dehydrogenase (288 aa).

Residues lysine 71 and aspartate 107 each contribute to the substrate site. NAD(+)-binding positions include 132-135 (AGGA), 155-158 (NRRD), lysine 205, 232-235 (CVYN), and glycine 255.

The protein belongs to the shikimate dehydrogenase family. In terms of assembly, homodimer.

It carries out the reaction L-quinate + NAD(+) = 3-dehydroquinate + NADH + H(+). It catalyses the reaction L-quinate + NADP(+) = 3-dehydroquinate + NADPH + H(+). The catalysed reaction is shikimate + NADP(+) = 3-dehydroshikimate + NADPH + H(+). The enzyme catalyses shikimate + NAD(+) = 3-dehydroshikimate + NADH + H(+). The protein operates within metabolic intermediate biosynthesis; chorismate biosynthesis; chorismate from D-erythrose 4-phosphate and phosphoenolpyruvate: step 4/7. In terms of biological role, the actual biological function of YdiB remains unclear, nor is it known whether 3-dehydroshikimate or quinate represents the natural substrate. Catalyzes the reversible NAD-dependent reduction of both 3-dehydroshikimate (DHSA) and 3-dehydroquinate to yield shikimate (SA) and quinate, respectively. It can use both NAD or NADP for catalysis, however it has higher catalytic efficiency with NAD. The protein is Quinate/shikimate dehydrogenase of Shigella sonnei (strain Ss046).